Consider the following 1040-residue polypeptide: Multidrug resistance protein MdtB (1040 aa).

Transmembrane regions (helical) follow at residues 16 to 36, 342 to 362, 369 to 389, 396 to 416, 440 to 460, 472 to 492, 537 to 557, 869 to 889, 890 to 910, 911 to 931, 968 to 988, and 998 to 1018; these read FIMR…AGII, DTQF…YVFL, IIPA…MVFL, LTLM…IVVI, IGFT…PLLF, FAVT…TLTP, WATL…WIVI, LIVA…ESFI, HPVT…LALM, LSGS…IGIV, ILMT…STGV, and IGMV…TPVI.

The protein belongs to the resistance-nodulation-cell division (RND) (TC 2.A.6) family. MdtB subfamily. Part of a tripartite efflux system composed of MdtA, MdtB and MdtC. MdtB forms a heteromultimer with MdtC.

Its subcellular location is the cell inner membrane. The protein is Multidrug resistance protein MdtB of Enterobacter sp. (strain 638).